A 486-amino-acid chain; its full sequence is MTKITRVGSASPPDGGWGWMIVAGCFLVTICTRAVTRCISIFFVEFQTYFAQDYSQTAWIHSIVDCMTMLCAPLGSVVSNQLSCQAGIMLGGLLASTGLILGSFATSLKHLYLSLGVLTGLGFALCYSPAIAMVGKYFSRRKAFAYGIAMSGSGIGTFILAPVVQLLIEQFSWRGALLILGGFVLNLCVCGALMRPITLKEDPSGPEKSHDRDAQREDCKQASPYSPLTKEWTETRLCCSLQQGYGFLLMSDFVVLAVSVLFMAYGCSPLFVYLVPYALSVGVSHHQAAFLMSILGVIDIVGNITFGWLTDRRCLKNYRYVCYLFAVALDGLCYLCLPMLQSFPLLVPFSCTFGYFDGAYVTLIPVVTAEIVGTTSLSSALGVVYFLHAVPYLVSPPIAGWLVDTTGSYTAAFLLCGFAMIFSSILLGFAKIAKRMKRTQVPFLVKDSDPKLHLWTNGSVAYSIAKELDQKDEESLAKARTGCNLT.

Topologically, residues 1–9 are cytoplasmic; sequence MTKITRVGS. A run of 6 helical transmembrane segments spans residues 10 to 30, 58 to 78, 86 to 106, 115 to 135, 148 to 168, and 177 to 197; these read ASPP…LVTI, AWIH…GSVV, AGIM…SFAT, LGVL…AMVG, IAMS…QLLI, and LLIL…MRPI. Positions 201-220 are enriched in basic and acidic residues; the sequence is EDPSGPEKSHDRDAQREDCK. A disordered region spans residues 201–221; it reads EDPSGPEKSHDRDAQREDCKQ. 6 helical membrane-spanning segments follow: residues 253 to 273, 289 to 309, 320 to 340, 353 to 373, 383 to 403, and 410 to 430; these read FVVL…LFVY, AFLM…FGWL, YVCY…LPML, FGYF…EIVG, VVYF…GWLV, and TAAF…LGFA. The Cytoplasmic portion of the chain corresponds to 431–486; that stretch reads KIAKRMKRTQVPFLVKDSDPKLHLWTNGSVAYSIAKELDQKDEESLAKARTGCNLT.

Belongs to the major facilitator superfamily. Monocarboxylate porter (TC 2.A.1.13) family. As to quaternary structure, interacts with isoform 2 of BSG; this interaction is required for its localization to the plasma membrane. Detected in kidney, choroid plexus, testis, lung, stomach, large and small intestine, spleen, fat and parotid gland. In eye, expressed in cornea, ciliary epithelium, lens epithelium and lens fiber.

The protein localises to the cell membrane. The protein resides in the basolateral cell membrane. It catalyses the reaction creatine(in) = creatine(out). It carries out the reaction guanidinoacetate(in) = guanidinoacetate(out). Its activity is regulated as follows. Creatine uptake is inhibited by carbonyl cyanide 3-chlorophenylhydrazone (CCCP) and by valinomycin. Functionally, functions as a transporter for creatine and as well for its precursor guanidinoacetate. Transport of creatine and GAA is independent of resting membrane potential and extracellular Na(+), Cl(-), or pH. Contributes to the process of creatine biosynthesis and distribution. The chain is Monocarboxylate transporter 12 from Rattus norvegicus (Rat).